The following is a 290-amino-acid chain: 33 kDa chaperonin (290 aa).

2 disulfides stabilise this stretch: Cys234–Cys236 and Cys267–Cys270.

Belongs to the HSP33 family. Under oxidizing conditions two disulfide bonds are formed involving the reactive cysteines. Under reducing conditions zinc is bound to the reactive cysteines and the protein is inactive.

The protein localises to the cytoplasm. Functionally, redox regulated molecular chaperone. Protects both thermally unfolding and oxidatively damaged proteins from irreversible aggregation. Plays an important role in the bacterial defense system toward oxidative stress. The sequence is that of 33 kDa chaperonin from Colwellia psychrerythraea (strain 34H / ATCC BAA-681) (Vibrio psychroerythus).